The chain runs to 508 residues: Histidine ammonia-lyase (508 aa).

The 5-imidazolinone (Ala-Gly) cross-link spans 139 to 141 (ASG). 2,3-didehydroalanine (Ser) is present on S140.

It belongs to the PAL/histidase family. Contains an active site 4-methylidene-imidazol-5-one (MIO), which is formed autocatalytically by cyclization and dehydration of residues Ala-Ser-Gly.

It localises to the cytoplasm. It carries out the reaction L-histidine = trans-urocanate + NH4(+). It functions in the pathway amino-acid degradation; L-histidine degradation into L-glutamate; N-formimidoyl-L-glutamate from L-histidine: step 1/3. The protein is Histidine ammonia-lyase of Acidiphilium cryptum (strain JF-5).